We begin with the raw amino-acid sequence, 187 residues long: Nuclear transcription factor Y subunit C-8 (187 aa).

The disordered stretch occupies residues 163–187; that stretch reads WPGAWTSVSGEEEEARGKKGGDDGN. Residues 177 to 187 are compositionally biased toward basic and acidic residues; that stretch reads ARGKKGGDDGN.

Belongs to the NFYC/HAP5 subunit family. As to quaternary structure, heterotrimeric transcription factor composed of three components, NF-YA, NF-YB and NF-YC. NF-YB and NF-YC must interact and dimerize for NF-YA association and DNA binding. As to expression, expressed in flowers and siliques.

It localises to the nucleus. In terms of biological role, stimulates the transcription of various genes by recognizing and binding to a CCAAT motif in promoters. This is Nuclear transcription factor Y subunit C-8 (NFYC8) from Arabidopsis thaliana (Mouse-ear cress).